The chain runs to 490 residues: MNADHHLQQQQQQRQQHQQQQHQQQQHQHQHQQQQHTILQNVSNTNNIGSDSLASQPFNTTTVSSNKDDVMVNSGARELPMPLHQQQYIYPYYQYTSNNSNNNNVTAGNNMSASPIVHNNSNNSNNSNISASDYTVANNSTSNNNNNNNNNNNNNNNIHPNQFTAAANMNSNAAAAAYYSFPTANMPIPQQDQQYMFNPASYISHYYSAVNSNNNGNNAANNGSNNSSHSAPAPAPGPPHHHHHHSNTHNNLNNGGAVNTNNAPQHHPTIITDQFQFQLQQNPSPNLNLNINPAQPLHLPPGWKINTMPQPRPTTAPNHPPAPVPSSNPVASNLVPAPSSDHKYIHQCQFCEKSFKRKSWLKRHLLSHSQQRHFLCPWCLSRQKRKDNLLQHMKLKHTNYLLDELKKNNIIFNYNNSSSSNNNNDNNNNNNSNSASGSGGAGAAAAAATAPENEDGNGYDTNIKTLINDGVLNKDDVKRVLNNLIVSHNK.

An N-acetylmethionine modification is found at M1. 3 disordered regions span residues 1-69, 101-162, and 214-267; these read MNAD…NKDD, NNNN…HPNQ, and NNGN…PQHH. Residues 8–36 are compositionally biased toward low complexity; that stretch reads QQQQQQRQQHQQQQHQQQQHQHQHQQQQH. Residues 37 to 65 are compositionally biased toward polar residues; it reads TILQNVSNTNNIGSDSLASQPFNTTTVSS. The prion domain (PrD) stretch occupies residues 98 to 295; the sequence is NNSNNNNVTA…NLNLNINPAQ (198 aa). 4 stretches are compositionally biased toward low complexity: residues 119-128, 138-157, 214-232, and 248-264; these read NNSNNSNNSN, NNSTSNNNNNNNNNNNNNNN, NNGNNAANNGSNNSSHSAP, and THNNLNNGGAVNTNNAP. 2 C2H2-type zinc fingers span residues 346–368 and 374–397; these read HQCQFCEKSFKRKSWLKRHLLSH and FLCPWCLSRQKRKDNLLQHMKLKH. Positions 421–436 are enriched in low complexity; the sequence is NNNNDNNNNNNSNSAS. A disordered region spans residues 421-458; that stretch reads NNNNDNNNNNNSNSASGSGGAGAAAAAATAPENEDGNG.

The protein localises to the nucleus. In terms of biological role, transcription factor that affects the expression of a large set of genes. Recognizes and binds to the consensus sequence 5'-[CAT]AGG[TC]A-3' in the promoter region. Plays a major role in the repression of a specific subset of hypoxic genes (e.g. ANB1, DAN1 and HEM13) under aerobic conditions. Acts synergistically with the transcription factor ROX1 to recruit the general repression complex SSN6-TUP1 to the promoter of hypoxic genes. Represses transcription of ergosterol biosynthetic genes. Negatively regulates pheromone-induced gene expression. Can act as a transcriptional activator (e.g. of genes like CYC1, SUC2 and the Ty long terminal repeat delta promoter). The chain is Transcriptional activator/repressor MOT3 (MOT3) from Saccharomyces cerevisiae (strain ATCC 204508 / S288c) (Baker's yeast).